The chain runs to 304 residues: Ferrochelatase (304 aa).

Fe cation-binding residues include His-169 and Glu-241.

Belongs to the ferrochelatase family.

The protein resides in the cytoplasm. It carries out the reaction heme b + 2 H(+) = protoporphyrin IX + Fe(2+). Its pathway is porphyrin-containing compound metabolism; protoheme biosynthesis; protoheme from protoporphyrin-IX: step 1/1. In terms of biological role, catalyzes the ferrous insertion into protoporphyrin IX. The chain is Ferrochelatase from Thermoplasma volcanium (strain ATCC 51530 / DSM 4299 / JCM 9571 / NBRC 15438 / GSS1).